A 143-amino-acid chain; its full sequence is Histone H2B.2, sperm (143 aa).

The tract at residues 1-49 (MPKSPSKSSPRKGSPRKGSPRKGSPKRGGKGAKRAGKGGRRNVVKRRRR) is disordered. 5 consecutive short sequence motifs (SPKK motif) follow at residues 4-7 (SPSK), 9-12 (SPRK), 14-17 (SPRK), 19-22 (SPRK), and 24-27 (SPKR). Positions 9–49 (SPRKGSPRKGSPRKGSPKRGGKGAKRAGKGGRRNVVKRRRR) are enriched in basic residues. Residues serine 14, serine 19, and serine 24 each carry the phosphoserine modification. O-linked (GlcNAc) serine glycosylation occurs at serine 129. Residue lysine 137 forms a Glycyl lysine isopeptide (Lys-Gly) (interchain with G-Cter in ubiquitin) linkage.

Belongs to the histone H2B family. As to quaternary structure, the nucleosome is a histone octamer containing two molecules each of H2A, H2B, H3 and H4 assembled in one H3-H4 heterotetramer and two H2A-H2B heterodimers. The octamer wraps approximately 147 bp of DNA. Monoubiquitination of Lys-137 gives a specific tag for epigenetic transcriptional activation and is also prerequisite for histone H3 'Lys-4' and 'Lys-79' methylation. In terms of processing, phosphorylated on SPKK motifs 3, 4 and 5; which may regulate DNA binding. Dephosphorylated during maturation of spermatids to mature sperm and rephosphorylated at fertilization. Post-translationally, glcNAcylation at Ser-129 promotes monoubiquitination of Lys-137. It fluctuates in response to extracellular glucose, and associates with transcribed genes.

It is found in the nucleus. The protein resides in the chromosome. Core component of nucleosome. Nucleosomes wrap and compact DNA into chromatin, limiting DNA accessibility to the cellular machineries which require DNA as a template. Histones thereby play a central role in transcription regulation, DNA repair, DNA replication and chromosomal stability. DNA accessibility is regulated via a complex set of post-translational modifications of histones, also called histone code, and nucleosome remodeling. The chain is Histone H2B.2, sperm from Psammechinus miliaris (Green sea urchin).